Consider the following 149-residue polypeptide: Nucleoside diphosphate kinase 1 (149 aa).

6 residues coordinate ATP: Lys-9, Phe-57, Arg-85, Thr-91, Arg-102, and Asn-112. The active-site Pros-phosphohistidine intermediate is His-115.

This sequence belongs to the NDK family. In terms of assembly, homohexamer. The cofactor is Mg(2+).

The enzyme catalyses a 2'-deoxyribonucleoside 5'-diphosphate + ATP = a 2'-deoxyribonucleoside 5'-triphosphate + ADP. It catalyses the reaction a ribonucleoside 5'-diphosphate + ATP = a ribonucleoside 5'-triphosphate + ADP. In terms of biological role, major role in the synthesis of nucleoside triphosphates other than ATP. The ATP gamma phosphate is transferred to the NDP beta phosphate via a ping-pong mechanism, using a phosphorylated active-site intermediate. This NDK is microtubule-associated. The polypeptide is Nucleoside diphosphate kinase 1 (NDKR) (Oryza sativa subsp. japonica (Rice)).